The following is an 882-amino-acid chain: DNA polymerase 1 (882 aa).

The segment at 1–31 (MTKQLTLFDIPSSKPAKSEQNTQQSQQSAPV) is disordered. A compositionally biased stretch (polar residues) spans 18–29 (SEQNTQQSQQSA).

This sequence belongs to the DNA polymerase type-B family. In terms of assembly, interacts with PCNA subunit PCNA2 and weakly with PCNA3.

The catalysed reaction is DNA(n) + a 2'-deoxyribonucleoside 5'-triphosphate = DNA(n+1) + diphosphate. DNA synthesis is stimulated by PCNA heterotrimers. This polymerase possesses two enzymatic activities: DNA synthesis (polymerase) and an exonucleolytic activity that degrades single-stranded DNA in the 3'- to 5'-direction. DNA polymerase I, DNA ligase and the flap endonuclease may be constitutively associated with the PCNA heterotrimer forming a scanning complex able to couple DNA synthesis and Okazaki fragment maturation. This is DNA polymerase 1 (dpo1) from Saccharolobus solfataricus (strain ATCC 35092 / DSM 1617 / JCM 11322 / P2) (Sulfolobus solfataricus).